The primary structure comprises 242 residues: Lactate utilization protein A 2 (242 aa).

This sequence belongs to the LutA/YkgE family.

In terms of biological role, is involved in L-lactate degradation and allows cells to grow with lactate as the sole carbon source. This is Lactate utilization protein A 2 from Bacillus cereus (strain ZK / E33L).